A 184-amino-acid chain; its full sequence is Ribosome maturation factor RimM (184 aa).

Positions 101-174 (PDEYYDHQLV…RVVIADRPGL (74 aa)) constitute a PRC barrel domain.

Belongs to the RimM family. In terms of assembly, binds ribosomal protein uS19.

The protein resides in the cytoplasm. In terms of biological role, an accessory protein needed during the final step in the assembly of 30S ribosomal subunit, possibly for assembly of the head region. Essential for efficient processing of 16S rRNA. May be needed both before and after RbfA during the maturation of 16S rRNA. It has affinity for free ribosomal 30S subunits but not for 70S ribosomes. The polypeptide is Ribosome maturation factor RimM (Nocardioides sp. (strain ATCC BAA-499 / JS614)).